The sequence spans 533 residues: Putative adhesin P1-like protein MPN_409 (533 aa).

Disordered stretches follow at residues 15 to 45 (KNHRGVDDITAPKTGAGSSSGTSTNTSGSRS) and 92 to 166 (SGWR…SITP). A compositionally biased stretch (low complexity) spans 28–45 (TGAGSSSGTSTNTSGSRS). The segment covering 95–107 (RNDKNGQSDENHT) has biased composition (basic and acidic residues).

This sequence belongs to the adhesin P1 family.

This chain is Putative adhesin P1-like protein MPN_409, found in Mycoplasma pneumoniae (strain ATCC 29342 / M129 / Subtype 1) (Mycoplasmoides pneumoniae).